Consider the following 151-residue polypeptide: Putative pre-16S rRNA nuclease (151 aa).

The protein belongs to the YqgF nuclease family.

The protein localises to the cytoplasm. Functionally, could be a nuclease involved in processing of the 5'-end of pre-16S rRNA. The chain is Putative pre-16S rRNA nuclease from Nitrosospira multiformis (strain ATCC 25196 / NCIMB 11849 / C 71).